A 119-amino-acid chain; its full sequence is UPF0102 protein SGR_1878 (119 aa).

Belongs to the UPF0102 family.

In Streptomyces griseus subsp. griseus (strain JCM 4626 / CBS 651.72 / NBRC 13350 / KCC S-0626 / ISP 5235), this protein is UPF0102 protein SGR_1878.